Reading from the N-terminus, the 271-residue chain is MKVMVLSLGKASPSKSDHELLDPFVSLVEFSVSPPGGFKDHPHRGFESVTYMFQGGIIHQDCNGNKGTIHEGDVQWMTAGRGIIHSEMPEEQVNKGLQLWINLPSSAKMIEPKNIEISSSEIPSADDYGVEVKVIAGESMGVKSPFYTKTPIMFLDFTLDPKAQTHQAVPESWTAFAYIVEGDEGVFSSSDSSTVQAHNVVVFGTGDEVSVWNTSNSRPLRFLLIAGEPIGEPVVQHGPFVMNSQDEIEMTIGDYRNGMNGFEMAKHWRSE.

The protein belongs to the pirin family.

The protein resides in the nucleus. The sequence is that of Putative pirin-like protein At3g59260 from Arabidopsis thaliana (Mouse-ear cress).